Here is a 232-residue protein sequence, read N- to C-terminus: Orotidine 5'-phosphate decarboxylase (232 aa).

Substrate contacts are provided by residues aspartate 14, lysine 36, 63 to 72 (DLKFHDIPNT), threonine 122, arginine 183, glutamine 192, glycine 212, and arginine 213. Residue lysine 65 is the Proton donor of the active site.

It belongs to the OMP decarboxylase family. Type 1 subfamily. In terms of assembly, homodimer.

It carries out the reaction orotidine 5'-phosphate + H(+) = UMP + CO2. It functions in the pathway pyrimidine metabolism; UMP biosynthesis via de novo pathway; UMP from orotate: step 2/2. Catalyzes the decarboxylation of orotidine 5'-monophosphate (OMP) to uridine 5'-monophosphate (UMP). This Psychrobacter arcticus (strain DSM 17307 / VKM B-2377 / 273-4) protein is Orotidine 5'-phosphate decarboxylase.